Reading from the N-terminus, the 452-residue chain is Pup--protein ligase (452 aa).

Glutamate 9 provides a ligand contact to Mg(2+). Arginine 53 is a binding site for ATP. Residue tyrosine 55 coordinates Mg(2+). Aspartate 57 functions as the Proton acceptor in the catalytic mechanism. Glutamate 63 is a binding site for Mg(2+). Residues threonine 66 and tryptophan 419 each contribute to the ATP site.

The protein belongs to the Pup ligase/Pup deamidase family. Pup-conjugating enzyme subfamily.

It carries out the reaction ATP + [prokaryotic ubiquitin-like protein]-L-glutamate + [protein]-L-lysine = ADP + phosphate + N(6)-([prokaryotic ubiquitin-like protein]-gamma-L-glutamyl)-[protein]-L-lysine.. Its pathway is protein degradation; proteasomal Pup-dependent pathway. It functions in the pathway protein modification; protein pupylation. Catalyzes the covalent attachment of the prokaryotic ubiquitin-like protein modifier Pup to the proteasomal substrate proteins, thereby targeting them for proteasomal degradation. This tagging system is termed pupylation. The ligation reaction involves the side-chain carboxylate of the C-terminal glutamate of Pup and the side-chain amino group of a substrate lysine. The protein is Pup--protein ligase of Rhodococcus erythropolis (strain PR4 / NBRC 100887).